The primary structure comprises 536 residues: MFS-type efflux pump MFS1 (536 aa).

3 helical membrane passes run 30–50 (VTGLKLAVIVTGLCLSVLLVA), 80–100 (YLLTICAFQLIFGKIYTFFPV), and 102–122 (WVFLIAITIFEIGSAICGAAP). N-linked (GlcNAc...) asparagine glycosylation is present at Asn-123. 3 helical membrane passes run 133–153 (VAGIGSAGIFSGALIIIAYSI), 163–183 (GAIGGMYGIASVAGPLMGGAF), and 191–211 (WCFYINLPIGAVTILSILIFL). N-linked (GlcNAc...) asparagine glycosylation is present at Asn-221. A run of 8 helical transmembrane segments spans residues 234–254 (IGTAFFMPSIICLLLALQWGG), 264–284 (IIALFVVFAVLISGFIYFQIR), 306–326 (FFLFTIGSAFFIMVYYLPIWF), 342–362 (IPMVLSLVVLSIASGITVTAI), 366–386 (APLYYVSTVLTSIGAGLLTTF), 400–420 (IIFGAGVGTGLQLSIIAAQAV), 426–446 (VAVGTVIMMFCQTLGGALFVS), and 503–523 (TWYVATALAALSVIGSVGMEW).

This sequence belongs to the major facilitator superfamily. TCR/Tet family.

It is found in the cell membrane. Functionally, MFS-type efflux pump involved in the modulation susceptibility to azoles, including fluconazole, itraconazole, miconazole and voriconazole. Also confers increased resistance chloramphenicol and thiamphenicol, suggesting that it acts as a pleiotropic drug transporter with a broad substrate spectrum. Finally, increases the tolerance to cycloheximide when expressed in S.cerevisiae, but not in dermatophyte species. This chain is MFS-type efflux pump MFS1, found in Arthroderma benhamiae (strain ATCC MYA-4681 / CBS 112371) (Trichophyton mentagrophytes).